The sequence spans 199 residues: Peptidyl-tRNA hydrolase (199 aa).

Y18 is a binding site for tRNA. The Proton acceptor role is filled by H23. Y72, N74, and N120 together coordinate tRNA.

Belongs to the PTH family. As to quaternary structure, monomer.

It localises to the cytoplasm. The catalysed reaction is an N-acyl-L-alpha-aminoacyl-tRNA + H2O = an N-acyl-L-amino acid + a tRNA + H(+). In terms of biological role, hydrolyzes ribosome-free peptidyl-tRNAs (with 1 or more amino acids incorporated), which drop off the ribosome during protein synthesis, or as a result of ribosome stalling. Functionally, catalyzes the release of premature peptidyl moieties from peptidyl-tRNA molecules trapped in stalled 50S ribosomal subunits, and thus maintains levels of free tRNAs and 50S ribosomes. This is Peptidyl-tRNA hydrolase from Bifidobacterium longum (strain DJO10A).